Consider the following 96-residue polypeptide: MGNLISTCSFSSRVNSTAKITDSSIWYPQPDQHISIRTFRELNQAPTSSPTSTRTEMFLNGVLSRSTDDLQGEDSRQPMTLTPRQLTQEVSRRLLM.

The N-myristoyl glycine; by host moiety is linked to residue glycine 2. Residues 66–96 (STDDLQGEDSRQPMTLTPRQLTQEVSRRLLM) form a disordered region. Polar residues predominate over residues 77-89 (QPMTLTPRQLTQE).

Belongs to the geminiviridae protein AC4/C4 family.

The protein resides in the host cell membrane. Its function is as follows. Pathogenicity determinant. May act as a suppressor of RNA-mediated gene silencing, also known as post-transcriptional gene silencing (PTGS), a mechanism of plant viral defense that limits the accumulation of viral RNAs. The protein is Protein C4 of Cynanchum acutum (Tomato).